Reading from the N-terminus, the 354-residue chain is C-C chemokine receptor type 5 (354 aa).

Over 1 to 32 (MDFQGSIPTYIYDIDYSMSAPCQKVNVKQIAA) the chain is Extracellular. S6 is a glycosylation site (O-linked (GalNAc...) serine). Y10 and Y16 each carry sulfotyrosine. 2 disulfides stabilise this stretch: C22-C271 and C103-C180. The chain crosses the membrane as a helical span at residues 33-60 (QLLPPLYSLVFIFGFVGNMMVFLILISC). At 61-70 (KKLKSMTDIY) the chain is on the cytoplasmic side. Residues 71-91 (LFNLAISDLLFLLTLPFWAHY) traverse the membrane as a helical segment. At 92–104 (AANEWVFGNIMCK) the chain is on the extracellular side. A helical membrane pass occupies residues 105–126 (LFTGIYHIGYFGGIFFIILLTI). Over 127–143 (DRYLAIVHAVFAIKART) the chain is Cytoplasmic. The helical transmembrane segment at 144–168 (VNFGVITSVVTWVVAVFVSLPEIIF) threads the bilayer. The Extracellular portion of the chain corresponds to 169-200 (MRSQKEGSHYTCSPHFLHIQYRFWKHFQTLKM). The chain crosses the membrane as a helical span at residues 201–220 (VILSLILPLLVMVICYSGIL). Over 221 to 237 (NTLFRCRNEKKRHRAVR) the chain is Cytoplasmic. The helical transmembrane segment at 238 to 262 (LIFAIMIVYFLFWTPYNIVLLLTTF) threads the bilayer. At 263-279 (QEYFGLNNCSSSNRLDQ) the chain is on the extracellular side. Residues 280–303 (AMQVTETLGMTHCCLNPVIYAFVG) form a helical membrane-spanning segment. At 304–354 (EKFRNYLSVFFRKHIVKRFCKHCSIFQQVNPDRVSSVYTRSTGEQEVSTGL) the chain is on the cytoplasmic side. 2 S-palmitoyl cysteine lipidation sites follow: C323 and C326. Phosphoserine; by BARK1 is present on residues S338, S339, S344, and S351.

Belongs to the G-protein coupled receptor 1 family. In terms of assembly, interacts with PRAF2. Efficient ligand binding to CCL3/MIP-1alpha and CCL4/MIP-1beta requires sulfation, O-glycosylation and sialic acid modifications. Glycosylation on Ser-6 is required for efficient binding of CCL4. Interacts with GRK2. Interacts with ARRB1 and ARRB2. Interacts with CNIH4. Interacts with S100A4; this interaction stimulates T-lymphocyte chemotaxis. Post-translationally, sulfated on at least 2 of the N-terminal tyrosines. Sulfation is required for efficient binding of the chemokines, CCL3 and CCL4. O-glycosylated, but not N-glycosylated. Ser-6 appears to be the major site. Also sialylated glycans present which contribute to chemokine binding. Ser-17 may also be glycosylated and, if so, with small moieties such as a T-antigen. In terms of processing, palmitoylation in the C-terminal is important for cell surface expression. Post-translationally, phosphorylation on serine residues in the C-terminal is stimulated by binding CC chemokines especially by APO-RANTES.

It is found in the cell membrane. Receptor for a number of inflammatory CC-chemokines including CCL3/MIP-1-alpha, CCL4/MIP-1-beta and RANTES and subsequently transduces a signal by increasing the intracellular calcium ion level. May play a role in the control of granulocytic lineage proliferation or differentiation. Participates in T-lymphocyte migration to the infection site by acting as a chemotactic receptor. The protein is C-C chemokine receptor type 5 (Ccr5) of Rattus norvegicus (Rat).